Reading from the N-terminus, the 136-residue chain is ATP synthase epsilon chain (136 aa).

It belongs to the ATPase epsilon chain family. In terms of assembly, F-type ATPases have 2 components, CF(1) - the catalytic core - and CF(0) - the membrane proton channel. CF(1) has five subunits: alpha(3), beta(3), gamma(1), delta(1), epsilon(1). CF(0) has three main subunits: a, b and c.

It is found in the cell membrane. Its function is as follows. Produces ATP from ADP in the presence of a proton gradient across the membrane. This Herpetosiphon aurantiacus (strain ATCC 23779 / DSM 785 / 114-95) protein is ATP synthase epsilon chain.